Reading from the N-terminus, the 1037-residue chain is Multidrug resistance protein MdtF (1037 aa).

Topologically, residues 1 to 9 (MANYFIDRP) are cytoplasmic. Residues 10–30 (VFAWVLAIIMMLAGGLAIMNL) form a helical membrane-spanning segment. The Periplasmic segment spans residues 31–338 (PVAQYPQIAP…TTPFIEISIQ (308 aa)). Residues 339 to 359 (EVFKTLVEAIILVFLVMYLFL) form a helical membrane-spanning segment. The Cytoplasmic portion of the chain corresponds to 360 to 369 (QNFRATIIPT). Residues 370–390 (IAVPVVILGTFAILSAVGFTI) traverse the membrane as a helical segment. Topologically, residues 391–392 (NT) are periplasmic. The helical transmembrane segment at 393–413 (LTMFGMVLAIGLLVDDAIVVV) threads the bilayer. Over 414-441 (ENVERVIAEDKLPPKEATHKSMGQIQRA) the chain is Cytoplasmic. Residues 442-462 (LVGIAVVLSAVFMPMAFMSGA) traverse the membrane as a helical segment. Residues 463 to 471 (TGEIYRQFS) are Periplasmic-facing. A helical membrane pass occupies residues 472–492 (ITLISSMLLSVFVAMSLTPAL). Residues 493–534 (CATILKAAPEGGHKPNALFARFNTLFEKSTQHYTDSTRSLLR) lie on the Cytoplasmic side of the membrane. Residues 535–555 (CTGRYMVIYLLICAGMAVLFL) traverse the membrane as a helical segment. Over 556–870 (RTPTSFLPEE…SYQEALSSNQ (315 aa)) the chain is Periplasmic. The helical transmembrane segment at 871 to 891 (APALYAISLVVVFLALAALYE) threads the bilayer. S892 is a topological domain (cytoplasmic). A helical membrane pass occupies residues 893 to 913 (WSIPFSVMLVVPLGVVGALLA). The Periplasmic segment spans residues 914–927 (TDLRGLSNDVYFQV). The helical transmembrane segment at 928–948 (GLLTTIGLSAKNAILIVEFAV) threads the bilayer. The Cytoplasmic segment spans residues 949-972 (EMMQKEGKTPIEAIIEAARMRLRP). A helical membrane pass occupies residues 973 to 993 (ILMTSLAFILGVLPLVISHGA). The Periplasmic segment spans residues 994-1006 (GSGAQNAVGTGVM). A helical transmembrane segment spans residues 1007-1027 (GGMFAATVLAIYFVPVFFVVV). At 1028 to 1037 (EHLFARFKKA) the chain is on the cytoplasmic side.

It belongs to the resistance-nodulation-cell division (RND) (TC 2.A.6) family. Homotrimer. Part of the tripartite efflux system MdtEF-TolC, which is composed of an inner membrane transporter, MdtF, a membrane fusion protein, MdtE, and an outer membrane component, TolC. The complex forms a large protein conduit and can translocate molecules across both the inner and outer membranes.

The protein resides in the cell inner membrane. Functionally, part of the tripartite efflux system MdtEF-TolC, which confers resistance to various compounds. The polypeptide is Multidrug resistance protein MdtF (mdtF) (Escherichia coli O157:H7).